The primary structure comprises 317 residues: L-lactate dehydrogenase (317 aa).

NAD(+) contacts are provided by residues V17, D38, K43, Y69, and 83-84 (GA). Substrate is bound by residues Q86 and R92. NAD(+) contacts are provided by residues S105, 122 to 124 (ATN), and S147. 124–127 (NPVD) contacts substrate. 152–155 (DTAR) provides a ligand contact to substrate. Residues R157 and H172 each coordinate beta-D-fructose 1,6-bisphosphate. H179 serves as the catalytic Proton acceptor. At Y224 the chain carries Phosphotyrosine. A substrate-binding site is contributed by T233.

Belongs to the LDH/MDH superfamily. LDH family. Homotetramer.

The protein resides in the cytoplasm. The catalysed reaction is (S)-lactate + NAD(+) = pyruvate + NADH + H(+). The protein operates within fermentation; pyruvate fermentation to lactate; (S)-lactate from pyruvate: step 1/1. With respect to regulation, allosterically activated by fructose 1,6-bisphosphate (FBP). Catalyzes the conversion of lactate to pyruvate. This is L-lactate dehydrogenase from Bacillus caldolyticus.